A 711-amino-acid chain; its full sequence is Arginine decarboxylase 2 (711 aa).

Lysine 147 is subject to N6-(pyridoxal phosphate)lysine. 331–341 (IDIGGGLGIDY) contributes to the substrate binding site. Positions 642–661 (MHTKGGSEGENEEEEEDDEF) are disordered. The segment covering 650–661 (GENEEEEEDDEF) has biased composition (acidic residues).

This sequence belongs to the Orn/Lys/Arg decarboxylase class-II family. SpeA subfamily. In terms of assembly, homodimer and heterodimer with ADC1. Requires pyridoxal 5'-phosphate as cofactor. Mg(2+) serves as cofactor.

Its subcellular location is the plastid. The protein resides in the chloroplast. It localises to the cytoplasm. It is found in the cytosol. The catalysed reaction is L-arginine + H(+) = agmatine + CO2. Its pathway is amine and polyamine biosynthesis; agmatine biosynthesis; agmatine from L-arginine: step 1/1. In terms of biological role, required for the biosynthesis of putrescine. Catalyzes the first step of polyamine (PA) biosynthesis to produce putrescine from arginine. Is a major contributor to basal arginine decarboxylase (ADC) activity and putrescine biosynthesis. Accumulation of putrescine plays a positive role in salt stress tolerance. Accumulation of putrescine plays a positive role in freezing tolerance. Production of PA is essential for normal seed development. Controls PA homeostasis which is crucial for normal plant growth and development. In Arabidopsis thaliana (Mouse-ear cress), this protein is Arginine decarboxylase 2.